Consider the following 296-residue polypeptide: tRNA dimethylallyltransferase (296 aa).

11–18 (GPTAVGKT) serves as a coordination point for ATP. Residue 13–18 (TAVGKT) participates in substrate binding. Residues 36-39 (DSQQ) form an interaction with substrate tRNA region.

This sequence belongs to the IPP transferase family. Monomer. Mg(2+) is required as a cofactor.

It carries out the reaction adenosine(37) in tRNA + dimethylallyl diphosphate = N(6)-dimethylallyladenosine(37) in tRNA + diphosphate. Functionally, catalyzes the transfer of a dimethylallyl group onto the adenine at position 37 in tRNAs that read codons beginning with uridine, leading to the formation of N6-(dimethylallyl)adenosine (i(6)A). In Streptococcus agalactiae serotype Ia (strain ATCC 27591 / A909 / CDC SS700), this protein is tRNA dimethylallyltransferase.